The sequence spans 186 residues: UPF0301 protein Neut_0448 (186 aa).

It belongs to the UPF0301 (AlgH) family.

In Nitrosomonas eutropha (strain DSM 101675 / C91 / Nm57), this protein is UPF0301 protein Neut_0448.